Consider the following 658-residue polypeptide: MERGTLQPRKKAPNGYGITPIVAHKTGEPVRYEVEDDLRKLKPSRTAPKPPAINTNLAEDTFSGFPLSQSRTTVSRVSLGSRQHSSSSIRKLQTNVSDVRSYDERNQKKSAFENFVSSMSSFLTGGGSSPTSSYGSGSASPRKSTVISSPFDPKHVTHVGFNYDTGEFTGMPTEWQALLKVSGITKSEQVQHPQAVLDAMAFYSQSKKYLEEGAKPPFPRESTEKPLLSVSALSSSSHLQPTSATSSSSRLYPSRPAPTPPASSSSSPLLSSQTVKTTTSNASRQPSPLVSSKSTDNIIRSHSPVLLTPQTLSTSETKHIRPNNSTPYQRRAETSTKPKAVATPQKVEAPSAPRLQKRAPRQQSNDSAVLAKLQSICNPKNPTLLYRNFVKIGQGASGDVYSARQVGTNLSVAIKKMNINQQPKKEFIVNEILVMKSHHHKNIVNFIDTFFYKSELWMVMEYMRGGSLTEVVTNNTLSEGQIAAICKETLEGLQHLHENGIVHRDIKSDNILLSLQGDIKLTDFGFCAQIDSNMTKRTTMVGTPYWMAPEVVTRKEYGFKVDVWSLGIMAIEMVEGEPPYLNENPLRALYLIATIGTPKISRPELLSSVFHDFLSKSLTVNPKQRPSSGELLRHPFLKQAVPVSSLIPLIKSIHHSGK.

Disordered regions lie at residues 1-21, 39-104, 126-147, and 213-365; these read MERG…ITPI, RKLK…SYDE, GGSS…STVI, and GAKP…QQSN. Residues 66-98 show a composition bias toward polar residues; the sequence is PLSQSRTTVSRVSLGSRQHSSSSIRKLQTNVSD. Residues 129 to 140 show a composition bias toward low complexity; the sequence is SPTSSYGSGSAS. Positions 147–160 constitute a CRIB domain; it reads ISSPFDPKHVTHVG. 2 stretches are compositionally biased toward low complexity: residues 226-254 and 262-272; these read PLLS…LYPS and ASSSSSPLLSS. Over residues 273-300 the composition is skewed to polar residues; it reads QTVKTTTSNASRQPSPLVSSKSTDNIIR. S301 and S303 each carry phosphoserine. A Protein kinase domain is found at 386–637; it reads YRNFVKIGQG…SGELLRHPFL (252 aa). Residues 392–400 and K415 contribute to the ATP site; that span reads IGQGASGDV. The Proton acceptor role is filled by D505.

The protein belongs to the protein kinase superfamily. STE Ser/Thr protein kinase family. STE20 subfamily. In terms of assembly, forms an activated complex with GTP-bound ras-like cdc42. Interacts with skb1 and the SH3 domain of skb5 via its amino-terminal regulatory domain. Skb1, cdc42 and shk1 are able to form a ternary complex in vivo. Interacts with rga8 and may interact with byr2. Post-translationally, autophosphorylated on serine residues.

The protein resides in the cytoplasm. It localises to the cytoskeleton. Its subcellular location is the spindle. It catalyses the reaction L-seryl-[protein] + ATP = O-phospho-L-seryl-[protein] + ADP + H(+). The catalysed reaction is L-threonyl-[protein] + ATP = O-phospho-L-threonyl-[protein] + ADP + H(+). MAP4K component of the MAPK pathway required for the mating pheromone response. Phosphorylates histone H2B to form H2BS10ph. Phosphorylates tea1. Required for skb1-dependent mitotic inhibitory function. Regulates microtubule dynamics and cell polarity. The protein is Serine/threonine-protein kinase shk1/pak1 (shk1) of Schizosaccharomyces pombe (strain 972 / ATCC 24843) (Fission yeast).